A 242-amino-acid polypeptide reads, in one-letter code: Biosynthetic peptidoglycan transglycosylase (242 aa).

Residues 18–38 (VIMAVLCIAILYQLWMFSLVV) traverse the membrane as a helical segment.

Belongs to the glycosyltransferase 51 family.

It is found in the cell inner membrane. The enzyme catalyses [GlcNAc-(1-&gt;4)-Mur2Ac(oyl-L-Ala-gamma-D-Glu-L-Lys-D-Ala-D-Ala)](n)-di-trans,octa-cis-undecaprenyl diphosphate + beta-D-GlcNAc-(1-&gt;4)-Mur2Ac(oyl-L-Ala-gamma-D-Glu-L-Lys-D-Ala-D-Ala)-di-trans,octa-cis-undecaprenyl diphosphate = [GlcNAc-(1-&gt;4)-Mur2Ac(oyl-L-Ala-gamma-D-Glu-L-Lys-D-Ala-D-Ala)](n+1)-di-trans,octa-cis-undecaprenyl diphosphate + di-trans,octa-cis-undecaprenyl diphosphate + H(+). Its pathway is cell wall biogenesis; peptidoglycan biosynthesis. Functionally, peptidoglycan polymerase that catalyzes glycan chain elongation from lipid-linked precursors. The chain is Biosynthetic peptidoglycan transglycosylase from Bordetella bronchiseptica (strain ATCC BAA-588 / NCTC 13252 / RB50) (Alcaligenes bronchisepticus).